The following is an 85-amino-acid chain: ATP synthase subunit c (85 aa).

A run of 2 helical transmembrane segments spans residues 22-39 and 65-85; these read AIGA…IGKI and AALI…VFFL.

The protein belongs to the ATPase C chain family. In terms of assembly, F-type ATPases have 2 components, F(1) - the catalytic core - and F(0) - the membrane proton channel. F(1) has five subunits: alpha(3), beta(3), gamma(1), delta(1), epsilon(1). F(0) has three main subunits: a(1), b(2) and c(10-14). The alpha and beta chains form an alternating ring which encloses part of the gamma chain. F(1) is attached to F(0) by a central stalk formed by the gamma and epsilon chains, while a peripheral stalk is formed by the delta and b chains.

It localises to the cell inner membrane. Functionally, f(1)F(0) ATP synthase produces ATP from ADP in the presence of a proton or sodium gradient. F-type ATPases consist of two structural domains, F(1) containing the extramembraneous catalytic core and F(0) containing the membrane proton channel, linked together by a central stalk and a peripheral stalk. During catalysis, ATP synthesis in the catalytic domain of F(1) is coupled via a rotary mechanism of the central stalk subunits to proton translocation. Key component of the F(0) channel; it plays a direct role in translocation across the membrane. A homomeric c-ring of between 10-14 subunits forms the central stalk rotor element with the F(1) delta and epsilon subunits. The sequence is that of ATP synthase subunit c from Bacteroides thetaiotaomicron (strain ATCC 29148 / DSM 2079 / JCM 5827 / CCUG 10774 / NCTC 10582 / VPI-5482 / E50).